Consider the following 316-residue polypeptide: MTNTSSSDFTLLGLLVNSEAAGIVFTVILAVFLGAVTANLVMIFLIQVDSRLHTPMYFLLSQLSIMDTLFICTTVPKLLADMVSKEKIISFVACGIQIFLYLTMIGSEFFLLGLMAYDCYVAVCNPLRYPVLMNRKKCLLLAAGAWFGGSLDGFLLTPITMNVPYCGSRSINHFFCEIPAVLKLACADTSLYETLMYICCVLMLLIPISIISTSYSLILLTIHRMPSAEGRKKAFTTCSSHLTVVSIFYGAAFYTYVLPQSFHTPEQDKVVSAFYTIVTPMLNPLIYSLRNKDVIGAFKKVFACCSSAQKVATSDA.

Over 1-22 (MTNTSSSDFTLLGLLVNSEAAG) the chain is Extracellular. Asn3 carries an N-linked (GlcNAc...) asparagine glycan. A helical transmembrane segment spans residues 23–46 (IVFTVILAVFLGAVTANLVMIFLI). Topologically, residues 47–54 (QVDSRLHT) are cytoplasmic. The chain crosses the membrane as a helical span at residues 55 to 76 (PMYFLLSQLSIMDTLFICTTVP). Residues 77 to 97 (KLLADMVSKEKIISFVACGIQ) lie on the Extracellular side of the membrane. A disulfide bond links Cys94 and Cys186. The chain crosses the membrane as a helical span at residues 98–117 (IFLYLTMIGSEFFLLGLMAY). Residues 118–136 (DCYVAVCNPLRYPVLMNRK) lie on the Cytoplasmic side of the membrane. Residues 137-155 (KCLLLAAGAWFGGSLDGFL) form a helical membrane-spanning segment. At 156 to 192 (LTPITMNVPYCGSRSINHFFCEIPAVLKLACADTSLY) the chain is on the extracellular side. A helical membrane pass occupies residues 193 to 216 (ETLMYICCVLMLLIPISIISTSYS). Residues 217–233 (LILLTIHRMPSAEGRKK) are Cytoplasmic-facing. Residues 234–256 (AFTTCSSHLTVVSIFYGAAFYTY) traverse the membrane as a helical segment. The Extracellular portion of the chain corresponds to 257–269 (VLPQSFHTPEQDK). Residues 270–289 (VVSAFYTIVTPMLNPLIYSL) traverse the membrane as a helical segment. At 290-316 (RNKDVIGAFKKVFACCSSAQKVATSDA) the chain is on the cytoplasmic side.

The protein belongs to the G-protein coupled receptor 1 family.

It localises to the cell membrane. Functionally, odorant receptor. This is Olfactory receptor 2T11 (OR2T11) from Homo sapiens (Human).